The chain runs to 367 residues: Probable peptidoglycan glycosyltransferase FtsW (367 aa).

The Cytoplasmic portion of the chain corresponds to 1–8; sequence MRRVEGYD. Residues 9 to 29 traverse the membrane as a helical segment; it reads MIVLMMAVILTCFGVVMVYSA. Over 30–49 the chain is Periplasmic; it reads SSVMAAKKFHDGFFFLKRQS. The helical transmembrane segment at 50–70 threads the bilayer; the sequence is LYALIGFIGMGVAMHVDYHVW. Topologically, residues 71 to 72 are cytoplasmic; it reads KK. The chain crosses the membrane as a helical span at residues 73–93; sequence WAVPLFLGTFFLLLLVFVPGI. Over 94 to 138 the chain is Periplasmic; sequence GGTAKGASRWIRLPGFNFQPSELAKVALIMYMAYSLEKRQDKLKQ. A helical membrane pass occupies residues 139–159; sequence FMSGFFPYMLILGVFIAVLLA. The Cytoplasmic segment spans residues 160–161; that stretch reads QH. A helical membrane pass occupies residues 162–182; it reads DMGAALTMLAVAIVMLFAAGT. Residue lysine 183 is a topological domain, periplasmic. The chain crosses the membrane as a helical span at residues 184–204; that stretch reads VQYILGMGLVALPGICYLVFT. Residues 205–225 lie on the Cytoplasmic side of the membrane; the sequence is KAYRMRRITAFLDPWQDPTDA. The helical transmembrane segment at 226–246 threads the bilayer; it reads GFQIIQSWLALGTGGFFGQGL. The Periplasmic segment spans residues 247–266; the sequence is GEGKQKLFYLPEAHTDFILS. Residues 267–287 traverse the membrane as a helical segment; the sequence is VLGEEMGFIGVVVIASMFLLL. The Cytoplasmic portion of the chain corresponds to 288-304; that stretch reads VQRSIRVAIAAEDSFGR. A helical membrane pass occupies residues 305-325; it reads FLAFGIAILLGLEAFVNMAVV. Residues 326-335 are Periplasmic-facing; sequence TGLLPTKGIA. Residues 336–356 form a helical membrane-spanning segment; it reads LPFLSYGGSSLIISLCSVGVL. Over 357–367 the chain is Cytoplasmic; that stretch reads LNVSTRMRGAA.

It belongs to the SEDS family. FtsW subfamily.

Its subcellular location is the cell inner membrane. It carries out the reaction [GlcNAc-(1-&gt;4)-Mur2Ac(oyl-L-Ala-gamma-D-Glu-L-Lys-D-Ala-D-Ala)](n)-di-trans,octa-cis-undecaprenyl diphosphate + beta-D-GlcNAc-(1-&gt;4)-Mur2Ac(oyl-L-Ala-gamma-D-Glu-L-Lys-D-Ala-D-Ala)-di-trans,octa-cis-undecaprenyl diphosphate = [GlcNAc-(1-&gt;4)-Mur2Ac(oyl-L-Ala-gamma-D-Glu-L-Lys-D-Ala-D-Ala)](n+1)-di-trans,octa-cis-undecaprenyl diphosphate + di-trans,octa-cis-undecaprenyl diphosphate + H(+). The protein operates within cell wall biogenesis; peptidoglycan biosynthesis. In terms of biological role, peptidoglycan polymerase that is essential for cell division. In Geobacter sp. (strain M18), this protein is Probable peptidoglycan glycosyltransferase FtsW.